The sequence spans 434 residues: GPI-anchor transamidase component PIGU (434 aa).

Residues 1–3 (MAA) are Cytoplasmic-facing. Residues 4–22 (PLALVLVVAVTVRAALFRS) form a helical membrane-spanning segment. The Lumenal segment spans residues 23–78 (SLAEFISERVEVVSPLSSWKRVVEGLALLDLGVSPYSGAVFHETPLIIYLFHFLID). The helical transmembrane segment at 79 to 99 (YAELVFMITDALTAIALYFAI) threads the bilayer. At 100 to 136 (QDFNKVVFKKQKLLLELDQYAPDVAELIRTPMEMRYI) the chain is on the cytoplasmic side. The next 4 membrane-spanning stretches (helical) occupy residues 137-157 (PLKVALYLLNPYTILSCVAKS), 158-177 (TCAINNTLIAFFILTTIKGS), 178-193 (VFLSAVFLALATYQSL), and 194-204 (YPVTLFAPGLL). At 205–221 (YLLQRQYIPVKVKSKAF) the chain is on the cytoplasmic side. Lysine 215 contacts a cardiolipin. A helical membrane pass occupies residues 222-243 (WIFSWEYAMMYTGSLVVIVCLS). Topologically, residues 244 to 285 (FFLLSSWDFIPAVYGFILSVPDLTPNIGLFWYFFAEMFEHFS) are lumenal. Residues 286 to 305 (LFFVCVFQINVFFYTVPLAI) traverse the membrane as a helical segment. The Cytoplasmic segment spans residues 306 to 310 (KLKEH). Lysine 308 serves as a coordination point for a cardiolipin. A run of 2 helical transmembrane segments spans residues 311–330 (PIFFMFIQIAIISIFKSYPT) and 331–344 (VGDVALYMAFFPVW). At 345–353 (NHLYRFLRN) the chain is on the cytoplasmic side. Residues 354-371 (IFVLTCIIIVCSLLFPVL) traverse the membrane as a helical segment. The Lumenal portion of the chain corresponds to 372 to 383 (WHLWIYAGSANS). Residues asparagine 382 and asparagine 384 each coordinate a 2-acyl-6-[6-phosphoethanolamine-alpha-D-mannosyl-(1-&gt;2)-6-phosphoethanolamine-alpha-D-mannosyl-(1-&gt;6)-2-phosphoethanolamine-alpha-D-mannosyl-(1-&gt;4)-alpha-D-glucosaminyl]-1-(1-radyl,2-acyl-sn-glycero-3-phospho)-1D-myo-inositol. Residues 384–405 (NFFYAITLTFNVGQILLISDYF) traverse the membrane as a helical segment. Topologically, residues 406-434 (YAFLRREYYLTHGLYLTAKDGTEAMLVLK) are cytoplasmic.

The protein belongs to the PIGU family. As to quaternary structure, heteropentamer. Part of the GPI-anchor transamidase complex, consisting of PIGK, PIGT, PIGS, PIGU and GAA1.

The protein resides in the endoplasmic reticulum membrane. Its pathway is glycolipid biosynthesis; glycosylphosphatidylinositol-anchor biosynthesis. Its function is as follows. Component of the glycosylphosphatidylinositol-anchor (GPI-anchor) transamidase (GPI-T) complex that catalyzes the formation of the linkage between a proprotein and a GPI-anchor and participates in GPI anchored protein biosynthesis. Binds the lipid portion of GPI-anchor. May act as an organizer in the transmembrane layer to recruit other subunits, and thus is essential for assembly of the complex. In Mus musculus (Mouse), this protein is GPI-anchor transamidase component PIGU.